Here is a 332-residue protein sequence, read N- to C-terminus: 1-acyl-sn-glycerol-3-phosphate acyltransferase CHLREDRAFT_174358 (332 aa).

The helical transmembrane segment at phenylalanine 96–phenylalanine 116 threads the bilayer. Positions histidine 163–aspartate 168 match the HXXXXD motif motif. The chain crosses the membrane as a helical span at residues threonine 185–isoleucine 205. An EGTR motif motif is present at residues glutamate 235–arginine 238.

It belongs to the 1-acyl-sn-glycerol-3-phosphate acyltransferase family.

The protein localises to the membrane. The enzyme catalyses a 1-acyl-sn-glycero-3-phosphate + an acyl-CoA = a 1,2-diacyl-sn-glycero-3-phosphate + CoA. Its pathway is phospholipid metabolism; CDP-diacylglycerol biosynthesis; CDP-diacylglycerol from sn-glycerol 3-phosphate: step 2/3. Functionally, converts lysophosphatidic acid (LPA) into phosphatidic acid by incorporating an acyl moiety at the sn-2 position of the glycerol backbone. In Chlamydomonas reinhardtii (Chlamydomonas smithii), this protein is 1-acyl-sn-glycerol-3-phosphate acyltransferase CHLREDRAFT_174358.